Reading from the N-terminus, the 96-residue chain is UPF0235 protein YPK_0828 (96 aa).

It belongs to the UPF0235 family.

The polypeptide is UPF0235 protein YPK_0828 (Yersinia pseudotuberculosis serotype O:3 (strain YPIII)).